An 844-amino-acid polypeptide reads, in one-letter code: Probable inorganic carbon transporter subunit DabA 1 (844 aa).

Residues Cys-359, Asp-361, His-543, and Cys-558 each coordinate Zn(2+).

The protein belongs to the inorganic carbon transporter (TC 9.A.2) DabA family. Forms a complex with DabB. Zn(2+) serves as cofactor.

Its subcellular location is the cell inner membrane. Functionally, part of an energy-coupled inorganic carbon pump. The protein is Probable inorganic carbon transporter subunit DabA 1 of Bradyrhizobium sp. (strain BTAi1 / ATCC BAA-1182).